A 555-amino-acid chain; its full sequence is Protein tyrosine phosphatase-like protein egg-3 (555 aa).

Short sequence motifs (D-box) lie at residues 96–99 (RILL) and 130–133 (RDRL). A Tyrosine-protein phosphatase domain is found at 207 to 514 (FVQEFNRLDR…LFIYRVILRW (308 aa)). The RXXL motif; required for cortical localization motif lies at 253-256 (RVKL). An RXXL motif motif is present at residues 266-269 (RNEL). Short sequence motifs (RXXL motif; required for cortical localization) lie at residues 509–512 (RVIL) and 525–528 (RAAL).

Belongs to the protein-tyrosine phosphatase family. In terms of assembly, part of a complex, consisting of pseudophosphatases egg-3, egg-4, egg-5 and kinase mbk-2; this complex is required for the oocyte-to-zygote transition. Interacts (via tyrosine-protein phosphatase domain) with kinase mbk-2 (via N-terminus); the interaction does not affect mbk-2 kinase activity, is enhanced by mbk-2 tyrosine phosphorylation status and requires prior binding of mbk-2 to egg-4 and egg-5. Interacts with egg-4.

Its subcellular location is the cytoplasm. It localises to the cell cortex. Functionally, probable pseudophosphatase required for the oocyte-to-zygote transition during which it regulates the polarized dispersal of the cortical actin cytoskeleton, the synthesis of the eggshell chitin layer and the formation of the polar bodies after meiosis I and II. Acts as a scaffold to tether kinase mbk-2 and pseudophosphatases egg-4 and egg-5 to the oocyte cortex and thus restricts mbk-2 activity to the cortex during meiosis I. Regulates mbk-2 localization to cytoplasmic foci during meiosis II. Also required for chitin synthase chs-1 localization to the cell cortex of unfertilized oocytes and to cytoplasmic foci in the fertilized embryo. The protein is Protein tyrosine phosphatase-like protein egg-3 of Caenorhabditis elegans.